Here is a 205-residue protein sequence, read N- to C-terminus: Glycerol-3-phosphate acyltransferase (205 aa).

A run of 5 helical transmembrane segments spans residues 3 to 23 (VFALGMILFAYLCGSLSSAIL), 53 to 73 (GVAATVLVFDVLKGMLPVWLA), 80 to 100 (PFYLGLTAIAACLGHIYPVFF), 112 to 132 (LGAIAPIGWDLTGLMTGTWLL), and 138 to 158 (GYSSLGAIVSALIAPFYVWWF).

This sequence belongs to the PlsY family. Probably interacts with PlsX.

The protein localises to the cell inner membrane. It carries out the reaction an acyl phosphate + sn-glycerol 3-phosphate = a 1-acyl-sn-glycero-3-phosphate + phosphate. It functions in the pathway lipid metabolism; phospholipid metabolism. In terms of biological role, catalyzes the transfer of an acyl group from acyl-phosphate (acyl-PO(4)) to glycerol-3-phosphate (G3P) to form lysophosphatidic acid (LPA). This enzyme utilizes acyl-phosphate as fatty acyl donor, but not acyl-CoA or acyl-ACP. The protein is Glycerol-3-phosphate acyltransferase of Erwinia tasmaniensis (strain DSM 17950 / CFBP 7177 / CIP 109463 / NCPPB 4357 / Et1/99).